The following is a 49-amino-acid chain: MRTKITLACTECKQRNYDSMKNKKNNPDRLEMNKYCRFCKKHTLHRETK.

The protein belongs to the bacterial ribosomal protein bL33 family.

The sequence is that of Large ribosomal subunit protein bL33 from Clostridium botulinum (strain Alaska E43 / Type E3).